Consider the following 406-residue polypeptide: Vacuole membrane protein 1 (406 aa).

Residues 1 to 21 (MAENGKNCDQRRVAMNKEHHN) show a composition bias toward basic and acidic residues. The interval 1-35 (MAENGKNCDQRRVAMNKEHHNGNFTDPSSVNEKKR) is disordered. Ala2 carries the post-translational modification N-acetylalanine. Over 2–43 (AENGKNCDQRRVAMNKEHHNGNFTDPSSVNEKKRREREERQN) the chain is Cytoplasmic. Residues 44–64 (IVLWRQPLITLQYFSLEILVI) form a helical membrane-spanning segment. Residues 65 to 77 (LKEWTSKLWHRQS) are Extracellular-facing. The helical transmembrane segment at 78-98 (IVVSFLLLLAVLIATYYVEGV) threads the bilayer. The Cytoplasmic segment spans residues 99 to 109 (HQQYVQRIEKQ). Residues 110–130 (FLLYAYWIGLGILSSVGLGTG) form a helical membrane-spanning segment. Residues 131 to 250 (LHTFLLYLGP…ASRAKLAVQK (120 aa)) are Extracellular-facing. The tract at residues 173–316 (GTEGTISLWS…FVIITFSKHI (144 aa)) is VTT domain. Residues 251–271 (LVQKVGFFGILACASIPNPLF) form a helical membrane-spanning segment. Over 272–273 (DL) the chain is Cytoplasmic. Residues 274–294 (AGITCGHFLVPFWTFFGATLI) form a helical membrane-spanning segment. At 295 to 305 (GKAIIKMHIQK) the chain is on the extracellular side. The chain crosses the membrane as a helical span at residues 306–326 (IFVIITFSKHIVEQMVAFIGA). Residues 327-363 (VPGIGPSLQKPFQEYLEAQRQKLHHKSEMGTPQGENW) lie on the Cytoplasmic side of the membrane. Residues 364–384 (LSWMFEKLVVVMVCYFILSII) traverse the membrane as a helical segment. Topologically, residues 385–406 (NSMAQSYAKRIQQRLNSEEKTK) are extracellular.

Belongs to the VMP1 family. As to quaternary structure, interacts with BECN1. Interacts with TJP1. Interacts with TP53INP2. Interacts with TMEM41B. Interacts with ATP2A2, PLN and SLN; competes with PLN and SLN to prevent them from forming an inhibitory complex with ATP2A2. Interacts with ATG2A.

The protein resides in the endoplasmic reticulum-Golgi intermediate compartment membrane. The protein localises to the cell membrane. It localises to the vacuole membrane. It is found in the endoplasmic reticulum membrane. It carries out the reaction a 1,2-diacyl-sn-glycero-3-phospho-L-serine(in) = a 1,2-diacyl-sn-glycero-3-phospho-L-serine(out). The enzyme catalyses cholesterol(in) = cholesterol(out). The catalysed reaction is a 1,2-diacyl-sn-glycero-3-phosphocholine(in) = a 1,2-diacyl-sn-glycero-3-phosphocholine(out). It catalyses the reaction a 1,2-diacyl-sn-glycero-3-phosphoethanolamine(in) = a 1,2-diacyl-sn-glycero-3-phosphoethanolamine(out). In terms of biological role, phospholipid scramblase involved in lipid homeostasis and membrane dynamics processes. Has phospholipid scramblase activity toward cholesterol and phosphatidylserine, as well as phosphatidylethanolamine and phosphatidylcholine. Required for autophagosome formation: participates in early stages of autophagosome biogenesis at the endoplasmic reticulum (ER) membrane by reequilibrating the leaflets of the ER as lipids are extracted by ATG2 (ATG2A or ATG2B) to mediate autophagosome assembly. Regulates ATP2A2 activity to control ER-isolation membrane contacts for autophagosome formation. In addition to autophagy, involved in other processes in which phospholipid scramblase activity is required. Modulates ER contacts with lipid droplets, mitochondria and endosomes. Plays an essential role in formation of cell junctions. Upon stress such as bacterial and viral infection, promotes formation of cytoplasmic vacuoles followed by cell death. Involved in the cytoplasmic vacuolization of acinar cells during the early stage of acute pancreatitis. Functionally, (Microbial infection) Host factor required for infection by all flaviviruses tested such as Zika virus and Yellow fever virus. Probably required post-entry of the virus to facilitate the ER membrane remodeling necessary to form replication organelles. The chain is Vacuole membrane protein 1 from Homo sapiens (Human).